Consider the following 456-residue polypeptide: Adenylosuccinate lyase (456 aa).

N(6)-(1,2-dicarboxyethyl)-AMP is bound by residues 15-16 (RY), 90-92 (NHD), and 122-123 (TS). The active-site Proton donor/acceptor is the histidine 171. Residue glutamine 247 coordinates N(6)-(1,2-dicarboxyethyl)-AMP. Catalysis depends on serine 295, which acts as the Proton donor/acceptor. Residues serine 296, 301–303 (KVN), asparagine 309, arginine 335, and 340–344 (STVLR) each bind N(6)-(1,2-dicarboxyethyl)-AMP.

Belongs to the lyase 1 family. Adenylosuccinate lyase subfamily. In terms of assembly, homotetramer. Residues from neighboring subunits contribute catalytic and substrate-binding residues to each active site.

It catalyses the reaction N(6)-(1,2-dicarboxyethyl)-AMP = fumarate + AMP. The catalysed reaction is (2S)-2-[5-amino-1-(5-phospho-beta-D-ribosyl)imidazole-4-carboxamido]succinate = 5-amino-1-(5-phospho-beta-D-ribosyl)imidazole-4-carboxamide + fumarate. It participates in purine metabolism; AMP biosynthesis via de novo pathway; AMP from IMP: step 2/2. The protein operates within purine metabolism; IMP biosynthesis via de novo pathway; 5-amino-1-(5-phospho-D-ribosyl)imidazole-4-carboxamide from 5-amino-1-(5-phospho-D-ribosyl)imidazole-4-carboxylate: step 2/2. Functionally, catalyzes two reactions in de novo purine nucleotide biosynthesis. Catalyzes the breakdown of 5-aminoimidazole- (N-succinylocarboxamide) ribotide (SAICAR or 2-[5-amino-1-(5-phospho-beta-D-ribosyl)imidazole-4-carboxamido]succinate) to 5-aminoimidazole-4-carboxamide ribotide (AICAR or 5-amino-1-(5-phospho-beta-D-ribosyl)imidazole-4-carboxamide) and fumarate, and of adenylosuccinate (ADS or N(6)-(1,2-dicarboxyethyl)-AMP) to adenosine monophosphate (AMP) and fumarate. The polypeptide is Adenylosuccinate lyase (purB) (Haemophilus influenzae (strain ATCC 51907 / DSM 11121 / KW20 / Rd)).